The sequence spans 150 residues: Large ribosomal subunit protein uL15 (150 aa).

The segment at 18–43 (IVGRGSSSGWGKTSGKGHKGQQARSG) is disordered.

It belongs to the universal ribosomal protein uL15 family. In terms of assembly, part of the 50S ribosomal subunit.

Its function is as follows. Binds to the 23S rRNA. The protein is Large ribosomal subunit protein uL15 of Treponema denticola (strain ATCC 35405 / DSM 14222 / CIP 103919 / JCM 8153 / KCTC 15104).